A 598-amino-acid polypeptide reads, in one-letter code: Elongation factor 4 (598 aa).

The 183-residue stretch at 2 to 184 (KNIRNFSIIA…EIVAKIPAPE (183 aa)) folds into the tr-type G domain. Residues 14–19 (DHGKST) and 131–134 (NKID) contribute to the GTP site.

Belongs to the TRAFAC class translation factor GTPase superfamily. Classic translation factor GTPase family. LepA subfamily.

It is found in the cell inner membrane. The catalysed reaction is GTP + H2O = GDP + phosphate + H(+). Its function is as follows. Required for accurate and efficient protein synthesis under certain stress conditions. May act as a fidelity factor of the translation reaction, by catalyzing a one-codon backward translocation of tRNAs on improperly translocated ribosomes. Back-translocation proceeds from a post-translocation (POST) complex to a pre-translocation (PRE) complex, thus giving elongation factor G a second chance to translocate the tRNAs correctly. Binds to ribosomes in a GTP-dependent manner. The protein is Elongation factor 4 of Haemophilus influenzae (strain 86-028NP).